The following is a 79-amino-acid chain: Calcium/calmodulin-dependent protein kinase II inhibitor 2 (79 aa).

The interval 1 to 21 (MSEILPYGEDKMGRFGADPEG) is disordered. The inhibitory domain stretch occupies residues 43-69 (KRPPKLGQIGRAKRVVIEDDRIDDVLK).

This sequence belongs to the CAMK2N family. Interacts with CAMK2A and CAMK2B in the presence of Ca(2+)/calmodulin or after autophosphorylation.

The protein resides in the nucleus. It localises to the cytoplasm. It is found in the cytosol. Its subcellular location is the synapse. Its function is as follows. Potent and specific cellular inhibitor of CaM-kinase II (CAMK2). Traps Ca(2+)/calmodulin on CAMK2. This chain is Calcium/calmodulin-dependent protein kinase II inhibitor 2 (Camk2n2), found in Mus musculus (Mouse).